A 529-amino-acid chain; its full sequence is Transcription factor BIM1 (529 aa).

4 disordered regions span residues 1 to 91, 245 to 291, 425 to 450, and 491 to 529; these read MELP…HVLP, KKES…RRSK, RVAS…EEVL, and AKQS…KTGQ. Over residues 76-86 the composition is skewed to pro residues; it reads KPPPPAPPPPL. Composition is skewed to basic and acidic residues over residues 255 to 265 and 282 to 291; these read HRVDLRVKADV and SATEQRRRSK. The bHLH domain occupies 276–326; it reads TPRSKHSATEQRRRSKINDRFQMLRQLIPNSDQKRDKASFLLEVIEYIQFL. The segment covering 426 to 438 has biased composition (low complexity); that stretch reads VASSEAVEPSPSS. The segment covering 499–517 has biased composition (basic and acidic residues); that stretch reads FKDHEVREPVSRTRNDNVK. The span at 518 to 529 shows a compositional bias: basic residues; it reads QTRKPKRLKTGQ.

Homodimer. Interacts with BZR2/BES1 through both C-terminal and bHLH domains. Also interacts with LHW. In terms of tissue distribution, expressed constitutively in roots.

Its subcellular location is the nucleus. Positive brassinosteroid-signaling protein. Transcription factor that bind specifically to the DNA sequence 5'-CANNTG-3'(E box). Can bind individually to the promoter as a homodimer or synergistically as a heterodimer with BZR2/BES1. Does not itself activate transcription but enhances BZR2/BES1-mediated target gene activation. The protein is Transcription factor BIM1 (BIM1) of Arabidopsis thaliana (Mouse-ear cress).